A 78-amino-acid polypeptide reads, in one-letter code: Metallothionein-like protein type 2 (78 aa).

It belongs to the metallothionein superfamily. Type 15 family.

In terms of biological role, metallothioneins have a high content of cysteine residues that bind various heavy metals. The sequence is that of Metallothionein-like protein type 2 from Nicotiana glutinosa (Tobacco).